Here is a 275-residue protein sequence, read N- to C-terminus: Putative hydro-lyase SPO1111 (275 aa).

The protein belongs to the D-glutamate cyclase family.

In Ruegeria pomeroyi (strain ATCC 700808 / DSM 15171 / DSS-3) (Silicibacter pomeroyi), this protein is Putative hydro-lyase SPO1111.